The chain runs to 354 residues: tRNA-specific 2-thiouridylase MnmA (354 aa).

Residues 6-13 (LLSGGVDS) and L33 contribute to the ATP site. C100 acts as the Nucleophile in catalysis. A disulfide bond links C100 and C195. Position 123 (G123) interacts with ATP. The interval 145-147 (KDQ) is interaction with tRNA. The active-site Cysteine persulfide intermediate is the C195.

This sequence belongs to the MnmA/TRMU family.

The protein localises to the cytoplasm. The catalysed reaction is S-sulfanyl-L-cysteinyl-[protein] + uridine(34) in tRNA + AH2 + ATP = 2-thiouridine(34) in tRNA + L-cysteinyl-[protein] + A + AMP + diphosphate + H(+). Its function is as follows. Catalyzes the 2-thiolation of uridine at the wobble position (U34) of tRNA, leading to the formation of s(2)U34. The sequence is that of tRNA-specific 2-thiouridylase MnmA from Borrelia hermsii (strain HS1 / DAH).